Consider the following 88-residue polypeptide: Phosphocarrier protein HPr (88 aa).

Residues 1–88 (MASKEFHIVA…ETMTKEGLAE (88 aa)) form the HPr domain. His-15 functions as the Pros-phosphohistidine intermediate in the catalytic mechanism. Ser-46 bears the Phosphoserine; by HPrK/P mark.

Belongs to the HPr family.

It localises to the cytoplasm. Its activity is regulated as follows. Phosphorylation on Ser-46 inhibits the phosphoryl transfer from enzyme I to HPr. Its function is as follows. General (non sugar-specific) component of the phosphoenolpyruvate-dependent sugar phosphotransferase system (sugar PTS). This major carbohydrate active-transport system catalyzes the phosphorylation of incoming sugar substrates concomitantly with their translocation across the cell membrane. The phosphoryl group from phosphoenolpyruvate (PEP) is transferred to the phosphoryl carrier protein HPr by enzyme I. Phospho-HPr then transfers it to the PTS EIIA domain. P-Ser-HPr interacts with the catabolite control protein A (CcpA), forming a complex that binds to DNA at the catabolite response elements cre, operator sites preceding a large number of catabolite-regulated genes. Thus, P-Ser-HPr is a corepressor in carbon catabolite repression (CCR), a mechanism that allows bacteria to coordinate and optimize the utilization of available carbon sources. P-Ser-HPr also plays a role in inducer exclusion, in which it probably interacts with several non-PTS permeases and inhibits their transport activity. The sequence is that of Phosphocarrier protein HPr (ptsH) from Lactococcus lactis subsp. cremoris (Streptococcus cremoris).